The chain runs to 147 residues: MRNTSKYYLVDASVLPKVFIKVVEAKRILASGAIKNVNEAVRKVGISRSAYYKYKDHIFPFYETSQGKVITLFFTVEDYAGILSSIINRIADSKANIITINQNIPINGLADVTITIETGQMTRDIKDLLDDISSIEGVKRQEILARE.

Residues 71 to 146 (TLFFTVEDYA…GVKRQEILAR (76 aa)) form the ACT domain.

It belongs to the UPF0735 family.

The chain is UPF0735 ACT domain-containing protein Cthe_1377 from Acetivibrio thermocellus (strain ATCC 27405 / DSM 1237 / JCM 9322 / NBRC 103400 / NCIMB 10682 / NRRL B-4536 / VPI 7372) (Clostridium thermocellum).